The primary structure comprises 236 residues: Ribosome assembly factor MRT4 (236 aa).

This sequence belongs to the universal ribosomal protein uL10 family. In terms of assembly, associates with the pre-60S ribosomal particle.

Its subcellular location is the nucleus. The protein localises to the nucleolus. The protein resides in the cytoplasm. Functionally, component of the ribosome assembly machinery. Nuclear paralog of the ribosomal protein P0, it binds pre-60S subunits at an early stage of assembly in the nucleolus, and is replaced by P0 in cytoplasmic pre-60S subunits and mature 80S ribosomes. This is Ribosome assembly factor MRT4 from Saccharomyces cerevisiae (strain ATCC 204508 / S288c) (Baker's yeast).